We begin with the raw amino-acid sequence, 449 residues long: MRGEIMKEKCGIFGAYSQDATKKTYYGLMALQHRGQEGAGISVWDGDIRTVKGHGLVSEVFKGGSIRRLNGNPVIGHVRYSTSGSLSEVQPLEVECCGYKVSIAHNGTLTNFLPLRRFYESRGFKFRSSIDTEVIAVSFLNHYSELKDEFEAMSRVFEEVKGAYSVLMLFNGKLIAVRDPVGFRPLSFGAGDGYYFSSEDSALRMFCTNIRDVSPGEVIVVKDGEAESKIVGRSEHAYCVFEYIYFARPDSIINGISVYWARYRMGVELARESPAEGDVVIAVPDSGRTAALGFAHESGIPYMEGLIKNRYIGRTFIMPSGREIKVRLKLSPVKEVIKGRRIVLVDDSIVRGTTMKNIVKMLRDAGAREVHVRIASPPIRYPCYMGIDIPTRHELIAAWKSIEEIKKEIGADSLAYLSVEGLKRAIGTDKLCMACLTGNYPEWAFDFKV.

Positions 1-9 (MRGEIMKEK) are excised as a propeptide. Residue C10 is the Nucleophile of the active site. A Glutamine amidotransferase type-2 domain is found at 10–224 (CGIFGAYSQD…PGEVIVVKDG (215 aa)). Residue C239 coordinates [4Fe-4S] cluster. Positions 286, 346, and 347 each coordinate Mg(2+). [4Fe-4S] cluster contacts are provided by C383, C432, and C435.

This sequence in the C-terminal section; belongs to the purine/pyrimidine phosphoribosyltransferase family. Mg(2+) is required as a cofactor. [4Fe-4S] cluster serves as cofactor.

The catalysed reaction is 5-phospho-beta-D-ribosylamine + L-glutamate + diphosphate = 5-phospho-alpha-D-ribose 1-diphosphate + L-glutamine + H2O. The protein operates within purine metabolism; IMP biosynthesis via de novo pathway; N(1)-(5-phospho-D-ribosyl)glycinamide from 5-phospho-alpha-D-ribose 1-diphosphate: step 1/2. In terms of biological role, catalyzes the formation of phosphoribosylamine from phosphoribosylpyrophosphate (PRPP) and glutamine. The sequence is that of Amidophosphoribosyltransferase from Pyrococcus horikoshii (strain ATCC 700860 / DSM 12428 / JCM 9974 / NBRC 100139 / OT-3).